Consider the following 178-residue polypeptide: Ribosome maturation factor RimP (178 aa).

This sequence belongs to the RimP family.

Its subcellular location is the cytoplasm. Required for maturation of 30S ribosomal subunits. This Mycolicibacterium gilvum (strain PYR-GCK) (Mycobacterium gilvum (strain PYR-GCK)) protein is Ribosome maturation factor RimP.